The sequence spans 299 residues: AT-hook motif nuclear-localized protein 25 (299 aa).

Disordered regions lie at residues 1-87 (MSSY…RDSP) and 216-251 (EEET…CESN). Basic and acidic residues-rich tracts occupy residues 14-23 (HLQRPEDSRT) and 33-42 (NRSEADEAKA). 2 stretches are compositionally biased toward low complexity: residues 44 to 72 (TTPT…PAGS) and 224 to 239 (TTGV…QSSE). Positions 63–75 (RRPRGRPAGSKNK) form a DNA-binding region, a.T hook. A PPC domain is found at 87–233 (PNVLRSHVLE…TTGVQQQQPE (147 aa)). Residues 240 to 251 (VTGSGAQACESN) are compositionally biased toward polar residues.

In terms of assembly, homodimer. Interacts with AHL27 and AHL29. Expressed in seedlings, leaves, stems, floral tips and flowers.

It is found in the nucleus. Functionally, transcription factor that specifically binds AT-rich DNA sequences related to the nuclear matrix attachment regions (MARs). Binds the DNA sequence GNFEI (GA-negative feedback element I) in the GA3OX1 promoter. Binding to GNFEI sequence is required for GA-negative feedback regulation of GA3OX1. The polypeptide is AT-hook motif nuclear-localized protein 25 (Arabidopsis thaliana (Mouse-ear cress)).